The sequence spans 153 residues: Transthyretin (153 aa).

A signal peptide spans 1-24 (MAYYNTLALLTIFIFSGAFHRAQG). At C33 the chain carries Sulfocysteine. Residues K38, E77, and S140 each coordinate L-thyroxine.

It belongs to the transthyretin family. In terms of assembly, homotetramer. Dimer of dimers. In the homotetramer, subunits assemble around a central channel that can accommodate two ligand molecules. Interacts with RBP4. Sulfonation of the reactive cysteine Cys-33 enhances the stability of the native conformation of TTR, avoiding misassembly of the protein leading to amyloid formation. As to expression, detected in plasma (at protein level). Expressed during metamorphosis in tadpole liver but not in tadpole brain, nor adult liver.

The protein resides in the secreted. Functionally, thyroid hormone-binding protein, with a much higher binding affinity for triiodothyronine (T3) than for thyroxine (T4). Probably transports triiodothyronine from the bloodstream to the brain. This is Transthyretin from Aquarana catesbeiana (American bullfrog).